The following is a 247-amino-acid chain: Geranylgeranylglyceryl phosphate synthase (247 aa).

Residues D24 and S53 each contribute to the Mg(2+) site. Residues 172–178, 203–204, and 225–226 contribute to the sn-glycerol 1-phosphate site; these read YLEAGSG, GG, and GT.

The protein belongs to the GGGP/HepGP synthase family. Group II subfamily. Mg(2+) is required as a cofactor.

The protein resides in the cytoplasm. The enzyme catalyses sn-glycerol 1-phosphate + (2E,6E,10E)-geranylgeranyl diphosphate = sn-3-O-(geranylgeranyl)glycerol 1-phosphate + diphosphate. It functions in the pathway membrane lipid metabolism; glycerophospholipid metabolism. Functionally, prenyltransferase that catalyzes the transfer of the geranylgeranyl moiety of geranylgeranyl diphosphate (GGPP) to the C3 hydroxyl of sn-glycerol-1-phosphate (G1P). This reaction is the first ether-bond-formation step in the biosynthesis of archaeal membrane lipids. In Cenarchaeum symbiosum (strain A), this protein is Geranylgeranylglyceryl phosphate synthase.